We begin with the raw amino-acid sequence, 443 residues long: Chromosome partition protein MukF (443 aa).

The segment at 209–237 is leucine-zipper; sequence LDETSGNLRELQDVLNASGDKLQSQLLRI.

Belongs to the MukF family. In terms of assembly, interacts, and probably forms a ternary complex, with MukE and MukB via its C-terminal region. The complex formation is stimulated by calcium or magnesium. It is required for an interaction between MukE and MukB.

It is found in the cytoplasm. The protein resides in the nucleoid. Its function is as follows. Involved in chromosome condensation, segregation and cell cycle progression. May participate in facilitating chromosome segregation by condensation DNA from both sides of a centrally located replisome during cell division. Not required for mini-F plasmid partitioning. Probably acts via its interaction with MukB and MukE. Overexpression results in anucleate cells. It has a calcium binding activity. The polypeptide is Chromosome partition protein MukF (Glaesserella parasuis serovar 5 (strain SH0165) (Haemophilus parasuis)).